A 520-amino-acid polypeptide reads, in one-letter code: Amine oxidase [flavin-containing] B (520 aa).

Serine 2 is modified (N-acetylserine). The Cytoplasmic portion of the chain corresponds to 2-489; that stretch reads SNKSDVIVVG…TFLERHLPSV (488 aa). N6-acetyllysine occurs at positions 52 and 248. Position 397 is an S-8alpha-FAD cysteine (cysteine 397). Residues 490 to 516 traverse the membrane as a helical; Anchor for type IV membrane protein segment; that stretch reads PGLLKLFGLTTILSATALGFLAHKRGL. Residues 517–520 lie on the Mitochondrial intermembrane side of the membrane; the sequence is FVHF.

It belongs to the flavin monoamine oxidase family. As to quaternary structure, monomer, homo- or heterodimer (containing two subunits of similar size). Each subunit contains a covalently bound flavin. Enzymatically active as monomer. Requires FAD as cofactor.

Its subcellular location is the mitochondrion outer membrane. It carries out the reaction a secondary aliphatic amine + O2 + H2O = a primary amine + an aldehyde + H2O2. The catalysed reaction is (R)-adrenaline + O2 + H2O = (R)-3,4-dihydroxymandelaldehyde + methylamine + H2O2. The enzyme catalyses a primary methyl amine + O2 + H2O = an aldehyde + H2O2 + NH4(+). It catalyses the reaction benzylamine + O2 + H2O = benzaldehyde + H2O2 + NH4(+). It carries out the reaction dopamine + O2 + H2O = 3,4-dihydroxyphenylacetaldehyde + H2O2 + NH4(+). The catalysed reaction is tyramine + O2 + H2O = (4-hydroxyphenyl)acetaldehyde + H2O2 + NH4(+). The enzyme catalyses (R)-noradrenaline + O2 + H2O = (R)-3,4-dihydroxymandelaldehyde + H2O2 + NH4(+). It catalyses the reaction 2-phenylethylamine + O2 + H2O = 2-phenylacetaldehyde + H2O2 + NH4(+). It carries out the reaction N-acetylputrescine + O2 + H2O = 4-acetamidobutanal + H2O2 + NH4(+). Functionally, catalyzes the oxidative deamination of primary and some secondary amines such as neurotransmitters, and exogenous amines including the tertiary amine, neurotoxin 1-methyl-4-phenyl-1,2,3,6-tetrahydropyridine (MPTP), with concomitant reduction of oxygen to hydrogen peroxide and participates in the metabolism of neuroactive and vasoactive amines in the central nervous system and peripheral tissues. Preferentially degrades benzylamine and phenylethylamine. The chain is Amine oxidase [flavin-containing] B from Mus musculus (Mouse).